The sequence spans 279 residues: 3-methyl-2-oxobutanoate hydroxymethyltransferase (279 aa).

2 residues coordinate Mg(2+): Asp43 and Asp82. Residues 43–44 (DS), Asp82, and Lys112 contribute to the 3-methyl-2-oxobutanoate site. Glu114 serves as a coordination point for Mg(2+). Glu181 (proton acceptor) is an active-site residue.

Belongs to the PanB family. Homodecamer; pentamer of dimers. The cofactor is Mg(2+).

It localises to the cytoplasm. It carries out the reaction 3-methyl-2-oxobutanoate + (6R)-5,10-methylene-5,6,7,8-tetrahydrofolate + H2O = 2-dehydropantoate + (6S)-5,6,7,8-tetrahydrofolate. It functions in the pathway cofactor biosynthesis; (R)-pantothenate biosynthesis; (R)-pantoate from 3-methyl-2-oxobutanoate: step 1/2. In terms of biological role, catalyzes the reversible reaction in which hydroxymethyl group from 5,10-methylenetetrahydrofolate is transferred onto alpha-ketoisovalerate to form ketopantoate. The protein is 3-methyl-2-oxobutanoate hydroxymethyltransferase of Halalkalibacterium halodurans (strain ATCC BAA-125 / DSM 18197 / FERM 7344 / JCM 9153 / C-125) (Bacillus halodurans).